The following is a 421-amino-acid chain: Serine hydroxymethyltransferase (421 aa).

(6S)-5,6,7,8-tetrahydrofolate-binding positions include Leu-121 and 125–127; that span reads GHL. Lys-230 is subject to N6-(pyridoxal phosphate)lysine. Residues Glu-246 and 354 to 356 each bind (6S)-5,6,7,8-tetrahydrofolate; that span reads SPF.

Belongs to the SHMT family. In terms of assembly, homodimer. The cofactor is pyridoxal 5'-phosphate.

The protein resides in the cytoplasm. It carries out the reaction (6R)-5,10-methylene-5,6,7,8-tetrahydrofolate + glycine + H2O = (6S)-5,6,7,8-tetrahydrofolate + L-serine. It participates in one-carbon metabolism; tetrahydrofolate interconversion. The protein operates within amino-acid biosynthesis; glycine biosynthesis; glycine from L-serine: step 1/1. Its function is as follows. Catalyzes the reversible interconversion of serine and glycine with tetrahydrofolate (THF) serving as the one-carbon carrier. This reaction serves as the major source of one-carbon groups required for the biosynthesis of purines, thymidylate, methionine, and other important biomolecules. Also exhibits THF-independent aldolase activity toward beta-hydroxyamino acids, producing glycine and aldehydes, via a retro-aldol mechanism. This Rickettsia felis (strain ATCC VR-1525 / URRWXCal2) (Rickettsia azadi) protein is Serine hydroxymethyltransferase.